A 608-amino-acid polypeptide reads, in one-letter code: Chaperone protein HtpG (608 aa).

The tract at residues 1-332 is a; substrate-binding; it reads MQFQTEVNQL…VEDLPLNVSR (332 aa). The interval 333–536 is b; sequence EILQENQILK…KNKLDFAMQQ (204 aa). The segment at 537-608 is c; it reads LLKQMGQEQN…LTKIINKAFS (72 aa).

Belongs to the heat shock protein 90 family. As to quaternary structure, homodimer.

The protein localises to the cytoplasm. Functionally, molecular chaperone. Has ATPase activity. The chain is Chaperone protein HtpG from Campylobacter jejuni subsp. doylei (strain ATCC BAA-1458 / RM4099 / 269.97).